The following is a 377-amino-acid chain: MMARPWNFSAGPSALPEAVLQQAAAEMLDWHGSGMSVMEMSHRGKHFVQICDEAEADLRELLGLPADYAVMFMQGGGLGENAIVPMNLMGRRSTPAADFVVTGHWSTRSHKEAGRYGDAQIAASAAEATEIDGQAQSSWTWLPPVDTWRVRKDSAYLHLCSNETIGGVEFTEWPDPASLGAPDVPLVVDVSSHFLSRPLDIARAGLVFAGAQKNAGPAGVTVVIARRDLLGHALPICPSAFDYANVAADHSRYNTPPTFAIYVMGLVFKWIKAHGGVRGMEEANRAKAELLYGYLDGSAFYRNPVQASVRSRMNVPFVLRDESLNDAFLQGAEAAGLMQLKGHKSVGGMRASIYNAMPLAGVQALIDYLKEFERRHG.

Position 43 (Arg43) interacts with L-glutamate. Positions 105, 164, 189, and 212 each coordinate pyridoxal 5'-phosphate. At Lys213 the chain carries N6-(pyridoxal phosphate)lysine. A pyridoxal 5'-phosphate-binding site is contributed by 254 to 255 (NT).

Belongs to the class-V pyridoxal-phosphate-dependent aminotransferase family. SerC subfamily. In terms of assembly, homodimer. It depends on pyridoxal 5'-phosphate as a cofactor.

The protein localises to the cytoplasm. It catalyses the reaction O-phospho-L-serine + 2-oxoglutarate = 3-phosphooxypyruvate + L-glutamate. It carries out the reaction 4-(phosphooxy)-L-threonine + 2-oxoglutarate = (R)-3-hydroxy-2-oxo-4-phosphooxybutanoate + L-glutamate. It participates in amino-acid biosynthesis; L-serine biosynthesis; L-serine from 3-phospho-D-glycerate: step 2/3. It functions in the pathway cofactor biosynthesis; pyridoxine 5'-phosphate biosynthesis; pyridoxine 5'-phosphate from D-erythrose 4-phosphate: step 3/5. In terms of biological role, catalyzes the reversible conversion of 3-phosphohydroxypyruvate to phosphoserine and of 3-hydroxy-2-oxo-4-phosphonooxybutanoate to phosphohydroxythreonine. In Bordetella pertussis (strain Tohama I / ATCC BAA-589 / NCTC 13251), this protein is Phosphoserine aminotransferase.